A 210-amino-acid polypeptide reads, in one-letter code: Thymidylate kinase (210 aa).

Residue 10–17 (GPEGAGKS) participates in ATP binding.

The protein belongs to the thymidylate kinase family.

It carries out the reaction dTMP + ATP = dTDP + ADP. In terms of biological role, phosphorylation of dTMP to form dTDP in both de novo and salvage pathways of dTTP synthesis. The chain is Thymidylate kinase from Pseudomonas putida (strain GB-1).